The primary structure comprises 256 residues: Thiazole synthase (256 aa).

K95 (schiff-base intermediate with DXP) is an active-site residue. Residues G156, 183–184 (AG), and 205–206 (NT) each bind 1-deoxy-D-xylulose 5-phosphate.

It belongs to the ThiG family. In terms of assembly, homotetramer. Forms heterodimers with either ThiH or ThiS.

It localises to the cytoplasm. The catalysed reaction is [ThiS sulfur-carrier protein]-C-terminal-Gly-aminoethanethioate + 2-iminoacetate + 1-deoxy-D-xylulose 5-phosphate = [ThiS sulfur-carrier protein]-C-terminal Gly-Gly + 2-[(2R,5Z)-2-carboxy-4-methylthiazol-5(2H)-ylidene]ethyl phosphate + 2 H2O + H(+). The protein operates within cofactor biosynthesis; thiamine diphosphate biosynthesis. Its function is as follows. Catalyzes the rearrangement of 1-deoxy-D-xylulose 5-phosphate (DXP) to produce the thiazole phosphate moiety of thiamine. Sulfur is provided by the thiocarboxylate moiety of the carrier protein ThiS. In vitro, sulfur can be provided by H(2)S. In Gluconacetobacter diazotrophicus (strain ATCC 49037 / DSM 5601 / CCUG 37298 / CIP 103539 / LMG 7603 / PAl5), this protein is Thiazole synthase.